The following is a 232-amino-acid chain: Ribonuclease 3 (232 aa).

In terms of domain architecture, RNase III spans 5–134 (QTVLKNHFAI…FLGALLLDKD (130 aa)). Glu-47 is a binding site for Mg(2+). Asp-51 is an active-site residue. Mg(2+) contacts are provided by Asp-120 and Glu-123. Glu-123 is an active-site residue. Positions 160–229 (DYKTHLQELL…AKNAVEKGLD (70 aa)) constitute a DRBM domain.

It belongs to the ribonuclease III family. As to quaternary structure, homodimer. Mg(2+) is required as a cofactor.

It is found in the cytoplasm. It catalyses the reaction Endonucleolytic cleavage to 5'-phosphomonoester.. Its function is as follows. Digests double-stranded RNA. Involved in the processing of primary rRNA transcript to yield the immediate precursors to the large and small rRNAs (23S and 16S). Processes some mRNAs, and tRNAs when they are encoded in the rRNA operon. Processes pre-crRNA and tracrRNA of type II CRISPR loci if present in the organism. The polypeptide is Ribonuclease 3 (Streptococcus pneumoniae (strain Taiwan19F-14)).